We begin with the raw amino-acid sequence, 184 residues long: Transcription termination/antitermination protein NusG (184 aa).

Belongs to the NusG family.

Its function is as follows. Participates in transcription elongation, termination and antitermination. This is Transcription termination/antitermination protein NusG from Borreliella burgdorferi (strain ATCC 35210 / DSM 4680 / CIP 102532 / B31) (Borrelia burgdorferi).